We begin with the raw amino-acid sequence, 334 residues long: 3-ketodihydrosphingosine reductase (334 aa).

An N-terminal signal peptide occupies residues 1 to 20 (MIIYILFSLLAAVIVHLVYK). NADPH is bound by residues Gly36, Ser38, Ser39, Gly40, Arg62, Lys66, Asp100, and Ile101. Residues 36-40 (GGSSG) carry the GXSXG motif. The active-site Proton donor is Ser182. The Proton acceptor role is filled by Tyr196. Residues Tyr196 and Lys200 each coordinate NADP(+). Lys200 acts as the Lowers pKa of active site Tyr in catalysis.

The protein belongs to the short-chain dehydrogenases/reductases (SDR) family.

The protein resides in the endoplasmic reticulum. It catalyses the reaction sphinganine + NADP(+) = 3-oxosphinganine + NADPH + H(+). It participates in lipid metabolism; sphingolipid metabolism. Its function is as follows. Catalyzes the reduction of 3'-oxosphinganine (3-ketodihydrosphingosine/KDS) to sphinganine (dihydrosphingosine/DHS), the second step of de novo sphingolipid biosynthesis. The protein is 3-ketodihydrosphingosine reductase (ksrA-1) of Dictyostelium discoideum (Social amoeba).